A 256-amino-acid chain; its full sequence is Major prion protein 2 (256 aa).

The N-terminal stretch at 1 to 24 is a signal peptide; it reads MVKSHIGSWILVLFVAMWSDVALC. The segment at 25-233 is interaction with GRB2, ERI3 and SYN1; sequence KKRPKPGGGW…ESEAYYQRGA (209 aa). The segment at 28-110 is disordered; that stretch reads PKPGGGWNTG…QWNKPSKPKT (83 aa). Tandem repeats lie at residues 54–62, 63–70, 71–78, 79–86, and 87–95. Positions 54–95 are 5 X 8 AA tandem repeats of P-H-G-G-G-W-G-Q; sequence PQEGGDWGQPHGGGWGQPHVGGWGQPHGGGWGQPHGGGGWGQ. The span at 58-99 shows a compositional bias: gly residues; sequence GDWGQPHGGGWGQPHVGGWGQPHGGGWGQPHGGGGWGQGGTH. Residues His-64, Gly-65, Gly-66, His-72, Gly-74, His-80, Gly-81, Gly-82, His-88, Gly-90, and Gly-91 each contribute to the Cu(2+) site. Cys-182 and Cys-217 form a disulfide bridge. Residues Asn-184 and Asn-200 are each glycosylated (N-linked (GlcNAc...) asparagine). Residue Ala-233 is the site of GPI-anchor amidated alanine attachment. A propeptide spans 234 to 256 (removed in mature form); that stretch reads SVILFSSPPVILLISFLIFLIVG.

It belongs to the prion family. Monomer and homodimer. Has a tendency to aggregate into amyloid fibrils containing a cross-beta spine, formed by a steric zipper of superposed beta-strands. Soluble oligomers may represent an intermediate stage on the path to fibril formation. Copper binding may promote oligomerization. Interacts with GRB2, APP, ERI3/PRNPIP and SYN1. Mislocalized cytosolically exposed PrP interacts with MGRN1; this interaction alters MGRN1 subcellular location and causes lysosomal enlargement. Interacts with KIAA1191.

Its subcellular location is the cell membrane. The protein localises to the golgi apparatus. Its primary physiological function is unclear. Has cytoprotective activity against internal or environmental stresses. May play a role in neuronal development and synaptic plasticity. May be required for neuronal myelin sheath maintenance. May play a role in iron uptake and iron homeostasis. Soluble oligomers are toxic to cultured neuroblastoma cells and induce apoptosis (in vitro). Association with GPC1 (via its heparan sulfate chains) targets PRNP to lipid rafts. Also provides Cu(2+) or Zn(2+) for the ascorbate-mediated GPC1 deaminase degradation of its heparan sulfate side chains. This chain is Major prion protein 2, found in Tragelaphus strepsiceros (Greater kudu).